The sequence spans 105 residues: Urease subunit beta (105 aa).

This sequence belongs to the urease beta subunit family. In terms of assembly, heterotrimer of UreA (gamma), UreB (beta) and UreC (alpha) subunits. Three heterotrimers associate to form the active enzyme.

It is found in the cytoplasm. It catalyses the reaction urea + 2 H2O + H(+) = hydrogencarbonate + 2 NH4(+). It participates in nitrogen metabolism; urea degradation; CO(2) and NH(3) from urea (urease route): step 1/1. The polypeptide is Urease subunit beta (Prochlorococcus marinus (strain MIT 9313)).